The chain runs to 139 residues: Large ribosomal subunit protein uL13 (139 aa).

The protein belongs to the universal ribosomal protein uL13 family. In terms of assembly, part of the 50S ribosomal subunit.

Functionally, this protein is one of the early assembly proteins of the 50S ribosomal subunit, although it is not seen to bind rRNA by itself. It is important during the early stages of 50S assembly. The sequence is that of Large ribosomal subunit protein uL13 from Methanococcoides burtonii (strain DSM 6242 / NBRC 107633 / OCM 468 / ACE-M).